A 906-amino-acid chain; its full sequence is Nuclear factor NF-kappa-B p100 subunit (906 aa).

The RHD domain maps to 34-223; that stretch reads AVGPYLVIIE…DPIHDSKSPG (190 aa). The Nuclear localization signal motif lies at 336–340; the sequence is RNRKK. Residues 345–374 form a GRR region; the sequence is FPQHFGGGSHMGGAGGAGGFGAGGGGNLSF. 6 ANK repeats span residues 472 to 501, 511 to 540, 544 to 573, 582 to 611, 616 to 646, and 650 to 679; these read NGDTPLHLAIIHEQTAVIKQLIEVVVSIPS, LQQTPLHLAVITKQPQVVQLLLEAHANPTL, YGNSLLHLALQAADEEMLRMLLAHLASATP, QGLLPVHLAVKAKSPACLDLLVRKGADVNG, GGRTPLHLAVEMENLNMATHLVKKLGANVNS, and AGNTPLHLAAGLGSPTLTKLLLKAGADVQR. Disordered regions lie at residues 677 to 734 and 857 to 906; these read VQRE…GPRQ and EPLE…QQVH. Positions 684-695 are enriched in low complexity; it reads PVSPSSVRVPSS. A compositionally biased stretch (acidic residues) spans 697-708; the sequence is TDGDPEEQEQEQ. The Death domain occupies 771 to 857; sequence RNHLLSLDTD…GAVRMLRKPE (87 aa).

Component of the NF-kappa-B RelB-p52 complex. Post-translationally, while translation occurs, the particular unfolded structure after the GRR repeat promotes the generation of p52 making it an acceptable substrate for the proteasome. This process is known as cotranslational processing. The processed form is active and the unprocessed form acts as an inhibitor (I kappa B-like), being able to form cytosolic complexes with NF-kappa B, trapping it in the cytoplasm. Complete folding of the region downstream of the GRR repeat precludes processing. In terms of processing, constitutive processing is tightly suppressed by its C-terminal processing inhibitory domain, named PID, which contains the death domain.

It is found in the nucleus. The protein resides in the cytoplasm. Its function is as follows. NF-kappa-B is a pleiotropic transcription factor present in almost all cell types and is the endpoint of a series of signal transduction events that are initiated by a vast array of stimuli related to many biological processes such as inflammation, immunity, differentiation, cell growth, tumorigenesis and apoptosis. NF-kappa-B is a homo- or heterodimeric complex formed by the Rel-like domain-containing proteins RELA/p65, RELB, NFKB1/p105, NFKB1/p50, REL and NFKB2/p52. The dimers bind at kappa-B sites in the DNA of their target genes and the individual dimers have distinct preferences for different kappa-B sites that they can bind with distinguishable affinity and specificity. Different dimer combinations act as transcriptional activators or repressors, respectively. NF-kappa-B is controlled by various mechanisms of post-translational modification and subcellular compartmentalization as well as by interactions with other cofactors or corepressors. NF-kappa-B complexes are held in the cytoplasm in an inactive state complexed with members of the NF-kappa-B inhibitor (I-kappa-B) family. In a conventional activation pathway, I-kappa-B is phosphorylated by I-kappa-B kinases (IKKs) in response to different activators, subsequently degraded thus liberating the active NF-kappa-B complex which translocates to the nucleus. In a non-canonical activation pathway, the MAP3K14-activated CHUK/IKKA homodimer phosphorylates NFKB2/p100 associated with RelB, inducing its proteolytic processing to NFKB2/p52 and the formation of NF-kappa-B RelB-p52 complexes. The NF-kappa-B heterodimeric RelB-p52 complex is a transcriptional activator. NFKB2 appears to have dual functions such as cytoplasmic retention of attached NF-kappa-B proteins by p100 and generation of p52 by a cotranslational processing. The proteasome-mediated process ensures the production of both p52 and p100 and preserves their independent function. p52 binds to the kappa-B consensus sequence 5'-GGRNNYYCC-3', located in the enhancer region of genes involved in immune response and acute phase reactions. In concert with RELB, may play a role in the regulation of the circadian clock. This Gallus gallus (Chicken) protein is Nuclear factor NF-kappa-B p100 subunit (NFKB2).